Reading from the N-terminus, the 211-residue chain is Mediator of RNA polymerase II transcription subunit 20 (211 aa).

This sequence belongs to the Mediator complex subunit 20 family. Component of the Mediator complex.

Its subcellular location is the nucleus. Functionally, component of the Mediator complex, a coactivator involved in the regulated transcription of nearly all RNA polymerase II-dependent genes. Mediator functions as a bridge to convey information from gene-specific regulatory proteins to the basal RNA polymerase II transcription machinery. Mediator is recruited to promoters by direct interactions with regulatory proteins and serves as a scaffold for the assembly of a functional preinitiation complex with RNA polymerase II and the general transcription factors. The polypeptide is Mediator of RNA polymerase II transcription subunit 20 (MED20) (Gallus gallus (Chicken)).